We begin with the raw amino-acid sequence, 574 residues long: Glutamyl-tRNA(Gln) amidotransferase subunit B, mitochondrial (574 aa).

The protein belongs to the GatB/GatE family. GatB subfamily. Subunit of the heterotrimeric GatCAB amidotransferase (AdT) complex, composed of A, B and C subunits.

It localises to the mitochondrion. The catalysed reaction is L-glutamyl-tRNA(Gln) + L-glutamine + ATP + H2O = L-glutaminyl-tRNA(Gln) + L-glutamate + ADP + phosphate + H(+). Functionally, allows the formation of correctly charged Gln-tRNA(Gln) through the transamidation of misacylated Glu-tRNA(Gln) in the mitochondria. The reaction takes place in the presence of glutamine and ATP through an activated gamma-phospho-Glu-tRNA(Gln). The polypeptide is Glutamyl-tRNA(Gln) amidotransferase subunit B, mitochondrial (Phytophthora infestans (strain T30-4) (Potato late blight agent)).